A 492-amino-acid polypeptide reads, in one-letter code: Putative transporter SVOPL (492 aa).

A run of 10 helical transmembrane segments spans residues 48–68, 86–106, 121–141, 179–199, 203–223, 281–301, 348–368, 383–403, 429–449, and 458–478; these read IALF…IMLI, VALV…LFGL, FLWG…IWFV, VFWL…IPTI, WLIR…KFIP, TLQI…VILA, IIST…INFL, LFFL…FLFM, ALGM…APFI, and ILGA…SAFT.

It belongs to the major facilitator superfamily.

It is found in the membrane. The polypeptide is Putative transporter SVOPL (SVOPL) (Homo sapiens (Human)).